Here is a 125-residue protein sequence, read N- to C-terminus: Small ribosomal subunit protein uS12m (125 aa).

The disordered stretch occupies residues 1 to 51 (MPTKNQLIRHGREEKRRTDRTRALDQCPQKQGVCPRVSTRTPKKPNSAPRK). Residues 10 to 23 (HGREEKRRTDRTRA) are compositionally biased toward basic and acidic residues.

The protein belongs to the universal ribosomal protein uS12 family.

The protein localises to the mitochondrion. Protein S12 is involved in the translation initiation step. This is Small ribosomal subunit protein uS12m (RPS12) from Nicotiana sylvestris (Wood tobacco).